A 1859-amino-acid polypeptide reads, in one-letter code: Retinitis pigmentosa 1-like 1 protein (1859 aa).

2 disordered regions span residues 1–22 (MNST…PSHR) and 115–154 (RKPP…YSWK). The region spanning 42-126 (KKITFLKRGD…PPKTSREPGR (85 aa)) is the Doublecortin 1 domain. Positions 115-126 (RKPPKTSREPGR) are enriched in basic and acidic residues. Polar residues predominate over residues 130–139 (KSPSAGQAQV). One can recognise a Doublecortin 2 domain in the interval 160–239 (RRLTLVKNGD…NEAFRCLEME (80 aa)). Disordered regions lie at residues 263 to 301 (PNAK…SGHR), 426 to 445 (IWRN…RRRW), 457 to 593 (WRQE…TQSH), 700 to 750 (MPQE…TSKA), 868 to 920 (CFGR…TPSA), 952 to 997 (NTEV…GVLS), 1152 to 1211 (TEDF…YPEL), 1227 to 1255 (ATGG…STML), 1298 to 1350 (GSQD…RVRE), and 1567 to 1859 (LQSK…DLDF). Positions 457–472 (WRQEANHRKGHDKDNL) are enriched in basic and acidic residues. Composition is skewed to polar residues over residues 499 to 512 (GSDT…ASSH) and 535 to 551 (PETQ…SVSA). Residues 716-728 (SPSNSPSAGNQAS) are compositionally biased toward low complexity. Residues 734–750 (PFSSSLDLQEPQATSKA) show a composition bias toward polar residues. Residues 870–883 (GRESASNGSTSSGH) show a composition bias toward low complexity. Polar residues-rich tracts occupy residues 1241-1252 (TWGNAPEQSVHS), 1336-1345 (ESPQHFSESN), and 1567-1577 (LQSKKGGSSNR). A compositionally biased stretch (basic and acidic residues) spans 1616-1632 (GEGKQRLRAEEDPEILK). Positions 1641 to 1652 (PEEDEATEEDGE) are enriched in acidic residues. Positions 1700 to 1720 (EASRERQQEVEGRHQDVKEDS) are enriched in basic and acidic residues. The segment covering 1756–1778 (SHHTACSSRALSLDNSSQVSQKG) has biased composition (polar residues).

In terms of assembly, interacts with RP1; has a synergistic effect with RP1 in photoreceptor differentiation. In terms of tissue distribution, retinal-specific; expressed in photoreceptor.

It localises to the cytoplasm. The protein localises to the cytoskeleton. Its subcellular location is the cilium axoneme. The protein resides in the cell projection. It is found in the cilium. It localises to the photoreceptor outer segment. Its function is as follows. Required for the differentiation of photoreceptor cells. Plays a role in the organization of outer segment of rod and cone photoreceptors. The chain is Retinitis pigmentosa 1-like 1 protein (Rp1l1) from Mus musculus (Mouse).